The sequence spans 291 residues: Ribonuclease Z (291 aa).

Residues His61, His63, Asp65, His66, His133, Asp201, and His257 each coordinate Zn(2+). The active-site Proton acceptor is Asp65.

This sequence belongs to the RNase Z family. In terms of assembly, homodimer. Zn(2+) serves as cofactor.

The catalysed reaction is Endonucleolytic cleavage of RNA, removing extra 3' nucleotides from tRNA precursor, generating 3' termini of tRNAs. A 3'-hydroxy group is left at the tRNA terminus and a 5'-phosphoryl group is left at the trailer molecule.. Functionally, zinc phosphodiesterase, which displays some tRNA 3'-processing endonuclease activity. Probably involved in tRNA maturation, by removing a 3'-trailer from precursor tRNA. This is Ribonuclease Z from Saccharolobus islandicus (strain M.16.27) (Sulfolobus islandicus).